We begin with the raw amino-acid sequence, 145 residues long: uncharacterized protein (145 aa).

Residues 1-21 (MWFLVKATFWFSLVLVLLPFL) form a helical membrane-spanning segment. The disordered stretch occupies residues 109–145 (TPAESVPSAEATEKAEPAFKRMPVPEHRLDPGPASGK). Positions 119-138 (ATEKAEPAFKRMPVPEHRLD) are enriched in basic and acidic residues.

It localises to the membrane. This is an uncharacterized protein from Rhizobium meliloti (strain 1021) (Ensifer meliloti).